Here is a 119-residue protein sequence, read N- to C-terminus: Large ribosomal subunit protein uL22 (119 aa).

The protein belongs to the universal ribosomal protein uL22 family. As to quaternary structure, part of the 50S ribosomal subunit.

Functionally, this protein binds specifically to 23S rRNA; its binding is stimulated by other ribosomal proteins, e.g. L4, L17, and L20. It is important during the early stages of 50S assembly. It makes multiple contacts with different domains of the 23S rRNA in the assembled 50S subunit and ribosome. The globular domain of the protein is located near the polypeptide exit tunnel on the outside of the subunit, while an extended beta-hairpin is found that lines the wall of the exit tunnel in the center of the 70S ribosome. In Chlorobium luteolum (strain DSM 273 / BCRC 81028 / 2530) (Pelodictyon luteolum), this protein is Large ribosomal subunit protein uL22.